Consider the following 378-residue polypeptide: Probable protein phosphatase 2C 55 (378 aa).

Disordered stretches follow at residues 1–59 (MRRH…ASKG) and 79–115 (EGEA…GVGC). Low complexity predominate over residues 7 to 26 (LGLLRRAAASSTSAASSRAG). A compositionally biased stretch (basic residues) spans 92 to 104 (GGRRGRNSKRQPP). The PPM-type phosphatase domain occupies 122 to 369 (SWGYSSFQGR…DNVTCIVLQF (248 aa)). Residues Asp158, Gly159, Asp321, and Asp360 each contribute to the Mn(2+) site.

This sequence belongs to the PP2C family. Mg(2+) serves as cofactor. Requires Mn(2+) as cofactor.

It catalyses the reaction O-phospho-L-seryl-[protein] + H2O = L-seryl-[protein] + phosphate. The enzyme catalyses O-phospho-L-threonyl-[protein] + H2O = L-threonyl-[protein] + phosphate. The protein is Probable protein phosphatase 2C 55 of Oryza sativa subsp. japonica (Rice).